The sequence spans 44 residues: Cuticle protein CP459 (44 aa).

Tandem repeats lie at residues Leu-3 to Leu-20 and Val-27 to Phe-44.

In terms of tissue distribution, calcified shell.

The protein is Cuticle protein CP459 of Cancer pagurus (Rock crab).